The following is a 249-amino-acid chain: MYSLNPSQIEASNLLYQVSSVEVGKHLYWQLGMFQVHGQVLITSWVVMAIIIITSVIASRNLQPIPSGTQNFLEYVLEFIRDLTKTQVGEEEYRSWVPFVGTLFLFIFISNWSGALIPWRLIELPSGELAAPTNDINTTVALALLTSVAYFYAGLSKKGLSYFGKYIQPTPILLPINILEDFTKPLSLSFRLFGNILADELVVAVLISLVPLVIPVPMMLLGLFTSGIQALIFATLAAAYIGESLEGHH.

Transmembrane regions (helical) follow at residues 38–58, 97–117, 136–156, 201–221, and 222–242; these read GQVLITSWVVMAIIIITSVIA, VPFVGTLFLFIFISNWSGALI, INTTVALALLTSVAYFYAGLS, LVVAVLISLVPLVIPVPMMLL, and GLFTSGIQALIFATLAAAYIG.

The protein belongs to the ATPase A chain family. In terms of assembly, F-type ATPases have 2 components, CF(1) - the catalytic core - and CF(0) - the membrane proton channel. CF(1) has five subunits: alpha(3), beta(3), gamma(1), delta(1), epsilon(1). CF(0) has four main subunits: a, b, b' and c.

The protein localises to the plastid. Its subcellular location is the chloroplast thylakoid membrane. In terms of biological role, key component of the proton channel; it plays a direct role in the translocation of protons across the membrane. The sequence is that of ATP synthase subunit a, chloroplastic from Chlorokybus atmophyticus (Soil alga).